Reading from the N-terminus, the 209-residue chain is Large ribosomal subunit protein uL3 (209 aa).

This sequence belongs to the universal ribosomal protein uL3 family. In terms of assembly, part of the 50S ribosomal subunit. Forms a cluster with proteins L14 and L19.

In terms of biological role, one of the primary rRNA binding proteins, it binds directly near the 3'-end of the 23S rRNA, where it nucleates assembly of the 50S subunit. In Clostridium botulinum (strain Okra / Type B1), this protein is Large ribosomal subunit protein uL3.